The chain runs to 230 residues: 2,3-bisphosphoglycerate-dependent phosphoglycerate mutase (230 aa).

Substrate is bound by residues Arg10–Asn17, Thr23–Gly24, Arg62, Glu89–Tyr92, Lys100, Arg116–Arg117, and Gly185–Asn186. His11 serves as the catalytic Tele-phosphohistidine intermediate. Glu89 serves as the catalytic Proton donor/acceptor.

The protein belongs to the phosphoglycerate mutase family. BPG-dependent PGAM subfamily. In terms of assembly, homodimer.

It catalyses the reaction (2R)-2-phosphoglycerate = (2R)-3-phosphoglycerate. The protein operates within carbohydrate degradation; glycolysis; pyruvate from D-glyceraldehyde 3-phosphate: step 3/5. Catalyzes the interconversion of 2-phosphoglycerate and 3-phosphoglycerate. The chain is 2,3-bisphosphoglycerate-dependent phosphoglycerate mutase from Buchnera aphidicola subsp. Cinara cedri (strain Cc).